Consider the following 94-residue polypeptide: Large ribosomal subunit protein eL42 (94 aa).

Zn(2+) is bound by residues Cys-11, Cys-14, Cys-70, and Cys-73. A C4-type zinc finger spans residues 11–73 (CPYCKKHTIH…IDLRFKCTEC (63 aa)).

The protein belongs to the eukaryotic ribosomal protein eL42 family. As to quaternary structure, part of the 50S ribosomal subunit. Zn(2+) is required as a cofactor.

Functionally, binds to the 23S rRNA. This chain is Large ribosomal subunit protein eL42, found in Methanocaldococcus jannaschii (strain ATCC 43067 / DSM 2661 / JAL-1 / JCM 10045 / NBRC 100440) (Methanococcus jannaschii).